Consider the following 251-residue polypeptide: Putative glutathione-independent glyoxalase hsp3105 (251 aa).

This sequence belongs to the peptidase C56 family. HSP31-like subfamily.

The protein resides in the cytoplasm. It localises to the nucleus. It carries out the reaction methylglyoxal + H2O = (R)-lactate + H(+). May catalyze the conversion of methylglyoxal (MG) to D-lactate in a single glutathione (GSH)-independent step. May play a role in detoxifying endogenously produced glyoxals. Involved in protection against reactive oxygen species (ROS). The chain is Putative glutathione-independent glyoxalase hsp3105 from Schizosaccharomyces pombe (strain 972 / ATCC 24843) (Fission yeast).